Here is a 20-residue protein sequence, read N- to C-terminus: DLPECCSATELELDSGKQTS.

A disordered region spans residues 1 to 20 (DLPECCSATELELDSGKQTS).

Its function is as follows. May have antimicrobial activity. The chain is Putative antimicrobial protein 2 from Cenchritis muricatus (Beaded periwinkle).